The sequence spans 380 residues: Probable inactive dehydrogenase easA (380 aa).

FMN-binding positions include 25–27, Ala-60, Gln-102, and His-171; that span reads PMT. Residues His-171 and Asn-174 each contribute to the substrate site. FMN is bound by residues Lys-223, Gly-299, 324 to 325, and Arg-325; that span reads GR. Residue Tyr-352 participates in substrate binding.

This sequence belongs to the NADH:flavin oxidoreductase/NADH oxidase family.

Its function is as follows. Probable inactive dehydrogenase; part of the gene cluster that mediates the biosynthesis of fungal ergot alkaloid. DmaW catalyzes the first step of ergot alkaloid biosynthesis by condensing dimethylallyl diphosphate (DMAP) and tryptophan to form 4-dimethylallyl-L-tryptophan. The second step is catalyzed by the methyltransferase easF that methylates 4-dimethylallyl-L-tryptophan in the presence of S-adenosyl-L-methionine, resulting in the formation of 4-dimethylallyl-L-abrine. The catalase easC and the FAD-dependent oxidoreductase easE then transform 4-dimethylallyl-L-abrine to chanoclavine-I which is further oxidized by easD in the presence of NAD(+), resulting in the formation of chanoclavine-I aldehyde. Agroclavine dehydrogenase easG then mediates the conversion of chanoclavine-I aldehyde to agroclavine via a non-enzymatic adduct reaction: the substrate is an iminium intermediate that is formed spontaneously from chanoclavine-I aldehyde in the presence of glutathione. The presence of easA is not required to complete this reaction. Further conversion of agroclavine to paspalic acid is a two-step process involving oxidation of agroclavine to elymoclavine and of elymoclavine to paspalic acid, the second step being performed by the elymoclavine oxidase cloA. Paspalic acid is then further converted to D-lysergic acid. Ergopeptines are assembled from D-lysergic acid and three different amino acids by the D-lysergyl-peptide-synthetases composed each of a monomudular and a trimodular nonribosomal peptide synthetase subunit. LpsB and lpsC encode the monomodular subunits responsible for D-lysergic acid activation and incorporation into the ergopeptine backbone. LpsA1 and A2 subunits encode the trimodular nonribosomal peptide synthetase assembling the tripeptide portion of ergopeptines. LpsA1 is responsible for formation of the major ergopeptine, ergotamine, and lpsA2 for alpha-ergocryptine, the minor ergopeptine of the total alkaloid mixture elaborated by C.purpurea. D-lysergyl-tripeptides are assembled by the nonribosomal peptide synthetases and released as N-(D-lysergyl-aminoacyl)-lactams. Cyclolization of the D-lysergyl-tripeptides is performed by the Fe(2+)/2-ketoglutarate-dependent dioxygenase easH which introduces a hydroxyl group into N-(D-lysergyl-aminoacyl)-lactam at alpha-C of the aminoacyl residue followed by spontaneous condensation with the terminal lactam carbonyl group. The sequence is that of Probable inactive dehydrogenase easA from Claviceps purpurea (strain 20.1) (Ergot fungus).